Consider the following 965-residue polypeptide: Kinesin-like protein KIN-7K, chloroplastic (965 aa).

The interval 1 to 69 is disordered; it reads MASRQGSKSR…PQTAQRSKEN (69 aa). A compositionally biased stretch (low complexity) spans 19–28; sequence STASSTTSSS. Positions 29–38 are enriched in polar residues; it reads KLYQETSIDG. Over residues 40 to 56 the composition is skewed to low complexity; it reads SSPASSSAQSKQQFFSP. The region spanning 69–388 is the Kinesin motor domain; that stretch reads NVTVTVRFRP…LKFAHRAKHI (320 aa). Residue 149–156 coordinates ATP; it reads GVTSSGKT. A coiled-coil region spans residues 389-483; sequence EIQAEQNKII…LTKLILVSTK (95 aa). Basic residues predominate over residues 551-561; it reads LLNWLKPKKRD. 2 disordered regions span residues 551–633 and 842–888; these read LLNW…KMSD and ATQK…ELRM. Residues 564-577 show a composition bias toward low complexity; the sequence is SSASDQSSVVKSNS. Over residues 606–623 the composition is skewed to basic and acidic residues; it reads SEPREDREALEDSSHEME. Coiled coils occupy residues 628–703 and 738–846; these read SNKM…FVMT and NRII…TQKS. Low complexity predominate over residues 851 to 862; it reads RNKTGTTTNVRN. A compositionally biased stretch (basic and acidic residues) spans 864–888; the sequence is GRRESLAKRQEHDSPSMELKRELRM. A coiled-coil region spans residues 896–931; sequence YEAALGEKEQREAELERILEETKQREAYLENELANM. A disordered region spans residues 942–965; it reads QGADSEISDSISETRQTEQTEGSF. A compositionally biased stretch (polar residues) spans 949–965; the sequence is SDSISETRQTEQTEGSF.

This sequence belongs to the TRAFAC class myosin-kinesin ATPase superfamily. Kinesin family. KIN-7 subfamily.

It localises to the plastid. Its subcellular location is the chloroplast. This chain is Kinesin-like protein KIN-7K, chloroplastic, found in Arabidopsis thaliana (Mouse-ear cress).